Reading from the N-terminus, the 442-residue chain is C4-dicarboxylate transport protein (442 aa).

The next 8 membrane-spanning stretches (helical) occupy residues 19-39 (QLYF…HFEP), 55-75 (LVKM…IAGM), 90-110 (AYFL…AHVV), 161-181 (ILQV…VGDA), 199-219 (LVGI…AFTI), 232-252 (WLVG…LGFV), 318-338 (IYMT…LTLG), and 366-386 (AATL…ILGV).

It belongs to the dicarboxylate/amino acid:cation symporter (DAACS) (TC 2.A.23) family.

It localises to the cell inner membrane. Its function is as follows. Responsible for the transport of dicarboxylates such as succinate, fumarate, and malate from the periplasm across the membrane. In Delftia acidovorans (strain DSM 14801 / SPH-1), this protein is C4-dicarboxylate transport protein.